Reading from the N-terminus, the 146-residue chain is uncharacterized protein (146 aa).

The segment covering 86-96 has biased composition (acidic residues); that stretch reads EFDSPMDEEEE. The disordered stretch occupies residues 86–124; sequence EFDSPMDEEEETKPREASLDQTAPKKSKKEELLVKNNNF.

This is an uncharacterized protein from Ostreid herpesvirus 1 (isolate France) (OsHV-1).